Here is a 156-residue protein sequence, read N- to C-terminus: Ribosome maturation factor RimP (156 aa).

Belongs to the RimP family.

The protein resides in the cytoplasm. Functionally, required for maturation of 30S ribosomal subunits. The chain is Ribosome maturation factor RimP from Bacillus cereus (strain G9842).